The following is a 513-amino-acid chain: MQLNSTEISELIKQRIAQFSVVSEAHNEGTIVSVSDGVIRIHGLADCMQGEMISLPGNRYAIALNLERDSVGAVVMGPYADLAEGMKVKCTGRILEVPVGRGLLGRVVNTLGAPIDGKGPVDNDGFSPIEVIAPGVIERQSVDQPVQTGYKSVDAMIPIGRGQRELIIGDRQTGKTAMAIDAIINQRDSGIKCVYVAIGQKASTISNVVRKLEEHGALSNTIVVVATASESAALQYLAPYAGCAMGEYFRDRGEDALIVYDDLSKQAVAYRQVSLLLRRPPGREAFPGDVFYLHSRLLERASRVNAEYVENFTKGEVKGKTGSLTALPIIETQAGDVSAFVPTNVISITDGQIFLETNLFNSGIRPAVNPGISVSRVGGAAQTKIIKKLSGGIRTALAQYRELAAFSQFASDLDEATRKQLSHGQKVTELLKQKQYAPMSVAQQGLVLFAAERGYLEDVELAKIGSFEAALLAYVDRDHAPLMQEINQSGGYNDEIEGKLKSILDSFKATQSW.

Position 169–176 (169–176) interacts with ATP; sequence GDRQTGKT.

This sequence belongs to the ATPase alpha/beta chains family. F-type ATPases have 2 components, CF(1) - the catalytic core - and CF(0) - the membrane proton channel. CF(1) has five subunits: alpha(3), beta(3), gamma(1), delta(1), epsilon(1). CF(0) has three main subunits: a(1), b(2) and c(9-12). The alpha and beta chains form an alternating ring which encloses part of the gamma chain. CF(1) is attached to CF(0) by a central stalk formed by the gamma and epsilon chains, while a peripheral stalk is formed by the delta and b chains.

The protein localises to the cell inner membrane. The catalysed reaction is ATP + H2O + 4 H(+)(in) = ADP + phosphate + 5 H(+)(out). In terms of biological role, produces ATP from ADP in the presence of a proton gradient across the membrane. The alpha chain is a regulatory subunit. The chain is ATP synthase subunit alpha from Enterobacter sp. (strain 638).